The following is a 190-amino-acid chain: Small ribosomal subunit protein eS7A (190 aa).

Ser2 carries the post-translational modification N-acetylserine. Glycyl lysine isopeptide (Lys-Gly) (interchain with G-Cter in ubiquitin) cross-links involve residues Lys83, Lys84, and Lys124.

This sequence belongs to the eukaryotic ribosomal protein eS7 family. As to quaternary structure, component of the small ribosomal subunit (SSU). Mature yeast ribosomes consist of a small (40S) and a large (60S) subunit. The 40S small subunit contains 1 molecule of ribosomal RNA (18S rRNA) and 33 different proteins (encoded by 57 genes). The large 60S subunit contains 3 rRNA molecules (25S, 5.8S and 5S rRNA) and 46 different proteins (encoded by 81 genes). Interacts with snoRNA U3. uS11 interacts with MPP10. Component of the ribosomal small subunit (SSU) processome composed of at least 40 protein subunits and snoRNA U3. N-terminally acetylated by acetyltransferase NatA. In terms of processing, ubiquitinated at Lys-83 and Lys-84 in response to stalled ribosomes, leading to activation of the No-Go Decay (NGD) pathway: first monoubiquitinated by MOT2/NOT4, followed by formation by HEL2 of 'Lys-63'-linked polyubiquitin chains on monoubiquitin.

The protein resides in the cytoplasm. It localises to the nucleus. Its subcellular location is the nucleolus. Functionally, component of the ribosome, a large ribonucleoprotein complex responsible for the synthesis of proteins in the cell. The small ribosomal subunit (SSU) binds messenger RNAs (mRNAs) and translates the encoded message by selecting cognate aminoacyl-transfer RNA (tRNA) molecules. The large subunit (LSU) contains the ribosomal catalytic site termed the peptidyl transferase center (PTC), which catalyzes the formation of peptide bonds, thereby polymerizing the amino acids delivered by tRNAs into a polypeptide chain. The nascent polypeptides leave the ribosome through a tunnel in the LSU and interact with protein factors that function in enzymatic processing, targeting, and the membrane insertion of nascent chains at the exit of the ribosomal tunnel. eS7 is involved in nucleolar processing of pre-18S ribosomal RNA and ribosome assembly. This Saccharomyces cerevisiae (strain ATCC 204508 / S288c) (Baker's yeast) protein is Small ribosomal subunit protein eS7A.